Consider the following 440-residue polypeptide: Transposon Ty1-GR2 Gag polyprotein (440 aa).

Positions 1-16 (MESQQLSQHSHISHGS) are enriched in low complexity. Disordered stretches follow at residues 1–93 (MESQ…MMTQ), 126–173 (PQSQ…RPPP), and 352–440 (GSRN…PGTY). Composition is skewed to polar residues over residues 48 to 60 (TKAN…TPAS) and 127 to 152 (QSQF…GNTF). The segment covering 153-165 (TDSSSADSDMTST) has biased composition (low complexity). The interval 299 to 401 (NNGIHINNKV…NSKSKTARAH (103 aa)) is RNA-binding. A compositionally biased stretch (low complexity) spans 402–418 (NVSTSNNSPSTDNDSIS). Position 416 is a phosphoserine (Ser416). A compositionally biased stretch (polar residues) spans 419-428 (KSTTEPIQLN). Basic and acidic residues predominate over residues 429-440 (NKHDLHLRPGTY).

As to quaternary structure, homotrimer.

It is found in the cytoplasm. Its function is as follows. Capsid protein (CA) is the structural component of the virus-like particle (VLP), forming the shell that encapsulates the retrotransposons dimeric RNA genome. The particles are assembled from trimer-clustered units and there are holes in the capsid shells that allow for the diffusion of macromolecules. CA also has nucleocapsid-like chaperone activity, promoting primer tRNA(i)-Met annealing to the multipartite primer-binding site (PBS), dimerization of Ty1 RNA and initiation of reverse transcription. This chain is Transposon Ty1-GR2 Gag polyprotein (TY1A-GR2), found in Saccharomyces cerevisiae (strain ATCC 204508 / S288c) (Baker's yeast).